We begin with the raw amino-acid sequence, 117 residues long: Small ribosomal subunit protein uS12c (117 aa).

Residues 9–40 (RNARQPIENRKKSPALRGCPQRRGTITPKKPN) are disordered.

Belongs to the universal ribosomal protein uS12 family. In terms of assembly, part of the 30S ribosomal subunit.

It localises to the plastid. It is found in the chloroplast. Functionally, with S4 and S5 plays an important role in translational accuracy. Located at the interface of the 30S and 50S subunits. In Pinus koraiensis (Korean pine), this protein is Small ribosomal subunit protein uS12c (rps12).